We begin with the raw amino-acid sequence, 948 residues long: Phosphoenolpyruvate carboxylase (948 aa).

Residues His-138 and Lys-610 contribute to the active site.

This sequence belongs to the PEPCase type 1 family. It depends on Mg(2+) as a cofactor.

It carries out the reaction oxaloacetate + phosphate = phosphoenolpyruvate + hydrogencarbonate. In terms of biological role, forms oxaloacetate, a four-carbon dicarboxylic acid source for the tricarboxylic acid cycle. This Streptococcus gordonii (strain Challis / ATCC 35105 / BCRC 15272 / CH1 / DL1 / V288) protein is Phosphoenolpyruvate carboxylase.